A 647-amino-acid chain; its full sequence is MRRYLAVRGGAGDVAEPDLNAKPQDNLYLAVNSEWLSKAEIPADQTSAGVNTELDIKIEKRMMKDFADIASGKEKMPDIRDFDKAIALYKIAKNFDKRDAEKANPIQNDLQKILDLINFDKFKDNATELFMGPYALPFVFDVDADMKNTDFNVLHFGGPSTFLPDTTTYKTPEAKKLLDILEKQSINLLEMAGIGKEEARVYVQNALAFDQKLSKVVKSTEEWSDYAAIYNPVSLTEFLAKFKSFDMADFLKTILPEKVERVIVMEPRFLDHADELINPANFDEIKGWMLVKYINSVAKYLSQDFRAAAFPFNQAISGTPELPSQIKQAYRLANGAFDEAVGIFYGKKYFGEEAKHDVEDMIHNMLKVYEQRINDNNWLSEDTKKKAIIKLRALVLKIGYPEKIEKIYDLLQIDPERSLYENEAQMATVRTKYMLDKLTQPVDRSVWLMPGNLNNACYDPQRNDLTFPAGILQAPFYDIHQSRGANYGGIGATIGHEVSHAFDNSGAKFDEHGNMNNWWTDEDFAEFNKRVGQMVDIFDGLQYGPAKINGKQVVGENIADLAGLACAVQAGKNDNVDLKDLFENYARSWMQKQRPEAIKTEVQVDVHAPQPTRVNIPVQCQDDFYTAFDVKPDDGMWLDPEDRITIW.

The Peptidase M13 domain maps to 1–647; the sequence is MRRYLAVRGG…LDPEDRITIW (647 aa). Zn(2+) is bound at residue H496. E497 is an active-site residue. Zn(2+) is bound by residues H500 and E556. The active-site Proton donor is the D560.

This sequence belongs to the peptidase M13 family. Zn(2+) is required as a cofactor.

This is Neutral endopeptidase (pepO) from Lactobacillus helveticus (Lactobacillus suntoryeus).